A 103-amino-acid chain; its full sequence is Carboxysome shell protein CcmK3 (103 aa).

The region spanning 4–91 (AVGVIQTLGF…PPENVLAVLP (88 aa)) is the BMC domain.

Belongs to the bacterial microcompartments protein family. CcmK subfamily. As to quaternary structure, forms mixed heterohexamers with CcmK4, probably with 1:5 CcmK3:CcmK4 stoichiometry. Only very weak interactions with CcmK1 and CcmK2 were seen. Bulky residues in the pore region probably preclude the formation of homohexamers by this subunit.

The protein localises to the carboxysome. In terms of biological role, a probably minor shell protein component of the carboxysome, a polyhedral inclusion where RuBisCO (ribulose bisphosphate carboxylase, rbcL-rbcS) is sequestered. This subunit probably does not form homohexamers. The chain is Carboxysome shell protein CcmK3 from Synechocystis sp. (strain ATCC 27184 / PCC 6803 / Kazusa).